We begin with the raw amino-acid sequence, 531 residues long: Peptide chain release factor 3 (531 aa).

The region spanning 10–278 (RRRRTFAIIS…SLIDWAPAPK (269 aa)) is the tr-type G domain. GTP-binding positions include 19-26 (SHPDAGKT), 87-91 (DTPGH), and 141-144 (NKYD).

It belongs to the TRAFAC class translation factor GTPase superfamily. Classic translation factor GTPase family. PrfC subfamily.

The protein resides in the cytoplasm. In terms of biological role, increases the formation of ribosomal termination complexes and stimulates activities of RF-1 and RF-2. It binds guanine nucleotides and has strong preference for UGA stop codons. It may interact directly with the ribosome. The stimulation of RF-1 and RF-2 is significantly reduced by GTP and GDP, but not by GMP. This chain is Peptide chain release factor 3, found in Neisseria meningitidis serogroup C / serotype 2a (strain ATCC 700532 / DSM 15464 / FAM18).